A 992-amino-acid polypeptide reads, in one-letter code: Leucine-rich repeat receptor-like serine/threonine-protein kinase BAM3 (992 aa).

A signal peptide spans 1–21 (MADKIFTFFLILSSISPLLCS). The Extracellular segment spans residues 22 to 656 (SLISPLNLSL…ARSRGEISAK (635 aa)). Asn28 carries N-linked (GlcNAc...) asparagine glycosylation. A disulfide bond links Cys64 and Cys71. N-linked (GlcNAc...) asparagine glycosylation is found at Asn75 and Asn87. 6 LRR repeats span residues 75 to 99 (NQSI…ISRL), 100 to 124 (SPSL…IYEL), 126 to 148 (GLEV…GFSQ), 150 to 173 (TQLV…LTTL), 174 to 199 (TRLE…SFLS), and 201 to 221 (KFLS…LANI). N-linked (GlcNAc...) asparagine glycans are attached at residues Asn131 and Asn163. The N-linked (GlcNAc...) asparagine glycan is linked to Asn220. Residues 226–231 (QLYLGY) carry the CLE45 peptide binding motif. LRR repeat units lie at residues 246–270 (LINL…LGNL), 271–294 (KNLE…LGNM), 296–320 (SLKT…GLQK), 322–342 (QLFN…VSEL), 343–366 (PDLQ…LGSN), 368–391 (NLIE…CFGR), 393–414 (LKIL…LGQC), 415–438 (EPLW…LIYL), 439–462 (PNLS…EAGN), 465–489 (FSSL…IRNL), 491–513 (SLQI…IGSL), 514–536 (KSLL…EFGD), 537–561 (CMSL…ISQI), 563–585 (ILNY…LGYM), and 586–610 (KSLT…QFSY). 2 N-linked (GlcNAc...) asparagine glycosylation sites follow: Asn256 and Asn293. Asn354 is a glycosylation site (N-linked (GlcNAc...) asparagine). Residues Asn440 and Asn472 are each glycosylated (N-linked (GlcNAc...) asparagine). Asn525 is a glycosylation site (N-linked (GlcNAc...) asparagine). Residues Asn568, Asn575, Asn597, Asn613, Asn631, and Asn635 are each glycosylated (N-linked (GlcNAc...) asparagine). The chain crosses the membrane as a helical span at residues 657–677 (FKLFFGLGLLGFFLVFVVLAV). The Cytoplasmic segment spans residues 678–992 (VKNRRMRKNN…ISQAKQPNTF (315 aa)). In terms of domain architecture, Protein kinase spans 710-992 (VKENHVIGKG…ISQAKQPNTF (283 aa)). Residues 716-724 (IGKGGRGIV) and Lys738 each bind ATP. The Proton acceptor role is filled by Asp836.

This sequence belongs to the protein kinase superfamily. Ser/Thr protein kinase family. In terms of assembly, interacts with CLE45, especially in roots. Binds to the dimer CLV2/CRN. Expressed in seedlings, roots, leaves, stems, inflorescences, flowers and siliques. In roots, confined to protophloem and sieve element precursor cells.

It is found in the cell membrane. It localises to the endoplasmic reticulum membrane. It catalyses the reaction L-seryl-[protein] + ATP = O-phospho-L-seryl-[protein] + ADP + H(+). The catalysed reaction is L-threonyl-[protein] + ATP = O-phospho-L-threonyl-[protein] + ADP + H(+). Necessary for male gametophyte development, as well as ovule specification and function. Required for the development of high-ordered vascular strands within the leaf and a correlated control of leaf shape, size and symmetry. LRR-rich receptor-like kinase (LRR-RLK) involved in the perception of CLE45 peptide ligand which mediates root growth inhibition by repressing protophloem differentiation; this mechanism requires CRN. BRX, BAM3, and CLE45 act together to regulate the transition of protophloem cells from proliferation to differentiation, thus impinging on postembryonic growth capacity of the root meristem. Necessary for CLE45 peptide-triggered accumulation of MAKR5 in developing sieve elements. This is Leucine-rich repeat receptor-like serine/threonine-protein kinase BAM3 from Arabidopsis thaliana (Mouse-ear cress).